Consider the following 581-residue polypeptide: Kelch-like protein 30 (581 aa).

The BTB domain maps to 33–100; that stretch reads ADVTLLVGDQ…VYTGRLTITQ (68 aa). A BACK domain is found at 135–237; that stretch reads CLGICEFGEQ…PRPCVQQLLA (103 aa). Kelch repeat units follow at residues 280–327, 328–378, 379–423, 425–472, 474–514, and 515–564; these read EEDE…ALNS, DVYV…ALNG, EIYA…GCQG, LYLV…ALNG, LYLI…PLGD, and LLYV…TIFL.

The sequence is that of Kelch-like protein 30 (Klhl30) from Mus musculus (Mouse).